The following is a 266-amino-acid chain: Large ribosomal subunit protein eL8 (266 aa).

Residues lysine 11, lysine 20, and lysine 21 each participate in a glycyl lysine isopeptide (Lys-Gly) (interchain with G-Cter in SUMO2) cross-link. Lysine 34 carries the N6-acetyllysine modification. Residue lysine 48 forms a Glycyl lysine isopeptide (Lys-Gly) (interchain with G-Cter in SUMO2) linkage. Lysine 97 carries the N6-acetyllysine; alternate modification. Residue lysine 97 forms a Glycyl lysine isopeptide (Lys-Gly) (interchain with G-Cter in SUMO2); alternate linkage. Residue lysine 125 forms a Glycyl lysine isopeptide (Lys-Gly) (interchain with G-Cter in SUMO2) linkage. Position 217 is an N6-acetyllysine (lysine 217). Residue lysine 245 forms a Glycyl lysine isopeptide (Lys-Gly) (interchain with G-Cter in SUMO2) linkage.

The protein belongs to the eukaryotic ribosomal protein eL8 family. Component of the large ribosomal subunit. Interacts with CRY1. Interacts with DICER1, AGO2, TARBP2, MOV10 and EIF6; they form a large RNA-induced silencing complex (RISC).

The protein localises to the cytoplasm. Component of the large ribosomal subunit. The ribosome is a large ribonucleoprotein complex responsible for the synthesis of proteins in the cell. The polypeptide is Large ribosomal subunit protein eL8 (RPL7A) (Bos taurus (Bovine)).